The primary structure comprises 230 residues: Ureidoacrylate amidohydrolase RutB (230 aa).

The Proton acceptor role is filled by aspartate 24. Residue lysine 133 is part of the active site. The active-site Nucleophile is the cysteine 166.

It belongs to the isochorismatase family. RutB subfamily.

The catalysed reaction is (Z)-3-ureidoacrylate + H2O + H(+) = (Z)-3-aminoacrylate + NH4(+) + CO2. The enzyme catalyses (Z)-3-ureidoacrylate + H2O = (Z)-3-aminoacrylate + carbamate + H(+). It catalyses the reaction (Z)-2-methylureidoacrylate + H2O + H(+) = (Z)-2-methylaminoacrylate + NH4(+) + CO2. In terms of biological role, hydrolyzes ureidoacrylate to form aminoacrylate and carbamate. The carbamate hydrolyzes spontaneously, thereby releasing one of the nitrogen atoms of the pyrimidine ring as ammonia and one of its carbon atoms as CO2. In Escherichia coli O6:K15:H31 (strain 536 / UPEC), this protein is Ureidoacrylate amidohydrolase RutB.